A 113-amino-acid polypeptide reads, in one-letter code: SGSCQLKTCWQVSPDFRSVGDTLREKFQSALFLPLHNGHGGIGGLLVPRDTQLVYFERSPTFCEQEDDIGSPGTRGRLCERTEQGFSGCSSMCCGRGHNVVRETRVERCNCKF.

S1 carries O-palmitoleoyl serine; by PORCN lipidation. Residues C79 and C94 are joined by a disulfide bond.

This sequence belongs to the Wnt family. Palmitoleoylation is required for efficient binding to frizzled receptors. Depalmitoleoylation leads to Wnt signaling pathway inhibition.

The protein localises to the secreted. It localises to the extracellular space. The protein resides in the extracellular matrix. Functionally, ligand for members of the frizzled family of seven transmembrane receptors. Probable developmental protein. May be a signaling molecule which affects the development of discrete regions of tissues. Is likely to signal over only few cell diameters. The chain is Protein Wnt-10 (WNT-10) from Eptatretus stoutii (Pacific hagfish).